Reading from the N-terminus, the 129-residue chain is Small ribosomal subunit protein uS11 (129 aa).

A disordered region spans residues 109 to 129 (VDDTPVPHNGCRPKKKFRKAS). Residues 119 to 129 (CRPKKKFRKAS) show a composition bias toward basic residues.

Belongs to the universal ribosomal protein uS11 family. Part of the 30S ribosomal subunit. Interacts with proteins S7 and S18. Binds to the C-terminus of IF-3; however exactly how IF-3 interacts with the 30S subunit is unclear.

Its function is as follows. Located on the upper part of the platform of the 30S subunit, where it bridges several disparate RNA helices of the 16S rRNA. Forms part of the Shine-Dalgarno cleft in the 70S ribosome. This chain is Small ribosomal subunit protein uS11 (rpsK), found in Thermus thermophilus (strain ATCC BAA-163 / DSM 7039 / HB27).